Reading from the N-terminus, the 126-residue chain is Major sperm protein 1 (126 aa).

N-acetylalanine is present on Ala-2. In terms of domain architecture, MSP spans 8–125 (DIATMPAQKV…RRKNLPIEYN (118 aa)).

As to expression, sperm.

The protein localises to the cell projection. Its subcellular location is the pseudopodium. It localises to the cytoplasm. It is found in the cytoskeleton. In terms of biological role, central component in molecular interactions underlying sperm crawling. Forms an extensive filament system that extends from sperm villipoda, along the leading edge of the pseudopod. This Globodera rostochiensis (Golden nematode worm) protein is Major sperm protein 1 (MSP-1).